The following is a 138-amino-acid chain: ATP synthase epsilon chain, chloroplastic (138 aa).

This sequence belongs to the ATPase epsilon chain family. In terms of assembly, F-type ATPases have 2 components, CF(1) - the catalytic core - and CF(0) - the membrane proton channel. CF(1) has five subunits: alpha(3), beta(3), gamma(1), delta(1), epsilon(1). CF(0) has three main subunits: a, b and c.

It is found in the plastid. It localises to the chloroplast thylakoid membrane. Its function is as follows. Produces ATP from ADP in the presence of a proton gradient across the membrane. This Staurastrum punctulatum (Green alga) protein is ATP synthase epsilon chain, chloroplastic.